Consider the following 388-residue polypeptide: Chaperone protein DnaJ (388 aa).

The 66-residue stretch at 5–70 (DYYEVLGVAR…QKRAAYDRFG (66 aa)) folds into the J domain. The segment at 141–219 (GKTETIRLPT…CGGAGRVTRE (79 aa)) adopts a CR-type zinc-finger fold. Zn(2+)-binding residues include cysteine 154, cysteine 157, cysteine 171, cysteine 174, cysteine 193, cysteine 196, cysteine 207, and cysteine 210. CXXCXGXG motif repeat units follow at residues 154-161 (CEVCAGSG), 171-178 (CPTCGGYG), 193-200 (CPNCHGRG), and 207-214 (CTACGGAG).

Belongs to the DnaJ family. In terms of assembly, homodimer. Requires Zn(2+) as cofactor.

The protein resides in the cytoplasm. Functionally, participates actively in the response to hyperosmotic and heat shock by preventing the aggregation of stress-denatured proteins and by disaggregating proteins, also in an autonomous, DnaK-independent fashion. Unfolded proteins bind initially to DnaJ; upon interaction with the DnaJ-bound protein, DnaK hydrolyzes its bound ATP, resulting in the formation of a stable complex. GrpE releases ADP from DnaK; ATP binding to DnaK triggers the release of the substrate protein, thus completing the reaction cycle. Several rounds of ATP-dependent interactions between DnaJ, DnaK and GrpE are required for fully efficient folding. Also involved, together with DnaK and GrpE, in the DNA replication of plasmids through activation of initiation proteins. This is Chaperone protein DnaJ from Methylobacterium nodulans (strain LMG 21967 / CNCM I-2342 / ORS 2060).